The sequence spans 346 residues: Methylthioribose-1-phosphate isomerase (346 aa).

Substrate contacts are provided by residues 48–50 (RGA), arginine 91, and glutamine 196. Aspartate 237 acts as the Proton donor in catalysis. Residue 247 to 248 (NK) participates in substrate binding.

Belongs to the eIF-2B alpha/beta/delta subunits family. MtnA subfamily.

The enzyme catalyses 5-(methylsulfanyl)-alpha-D-ribose 1-phosphate = 5-(methylsulfanyl)-D-ribulose 1-phosphate. It participates in amino-acid biosynthesis; L-methionine biosynthesis via salvage pathway; L-methionine from S-methyl-5-thio-alpha-D-ribose 1-phosphate: step 1/6. Functionally, catalyzes the interconversion of methylthioribose-1-phosphate (MTR-1-P) into methylthioribulose-1-phosphate (MTRu-1-P). This chain is Methylthioribose-1-phosphate isomerase, found in Thermosipho melanesiensis (strain DSM 12029 / CIP 104789 / BI429).